Consider the following 870-residue polypeptide: LPS-assembly protein LptD (870 aa).

The N-terminal stretch at 1 to 25 (MKQGKSFIFYCLVLLLCGFQQLSSA) is a signal peptide.

It belongs to the LptD family. As to quaternary structure, component of the lipopolysaccharide transport and assembly complex. Interacts with LptE and LptA.

Its subcellular location is the cell outer membrane. Functionally, together with LptE, is involved in the assembly of lipopolysaccharide (LPS) at the surface of the outer membrane. This is LPS-assembly protein LptD from Coxiella burnetii (strain RSA 493 / Nine Mile phase I).